Consider the following 1381-residue polypeptide: Regulator of G-protein signaling 12 (1381 aa).

Positions 21–98 constitute a PDZ domain; it reads SVEVARGRAG…VLHMVIAEGT (78 aa). 2 positions are modified to phosphoserine: S171 and S194. A Glycyl lysine isopeptide (Lys-Gly) (interchain with G-Cter in SUMO2) cross-link involves residue K195. In terms of domain architecture, PID spans 223-390; sequence SILNVAMVVG…VLQFISVLYR (168 aa). Disordered stretches follow at residues 409–428, 442–528, and 620–644; these read ADAHQNNSTSSNSDSGIGNF, LGGG…GAAG, and RKTKEDKKSSKLGRGVALAQTSQRT. Residues 412–428 are compositionally biased toward polar residues; sequence HQNNSTSSNSDSGIGNF. An omega-N-methylarginine mark is found at R524 and R633. Phosphoserine is present on residues S661 and S671. Positions 715–832 constitute an RGS domain; it reads SFERLLQDPV…LKSQLYQECV (118 aa). The tract at residues 842 to 942 is disordered; that stretch reads PDSQQVPSSP…ESQGSVSSAG (101 aa). Residues 849-869 show a composition bias toward low complexity; that stretch reads SSPASKHSISSDHSNVSTPKK. 2 positions are modified to phosphoserine: S850 and S879. The segment covering 914–923 has biased composition (basic and acidic residues); that stretch reads DHGDHAHDAP. Residue S943 is modified to Phosphoserine. RBD domains follow at residues 962-1032 and 1034-1104; these read KHCC…LEKR and LFRL…LEER. Residues 1102–1117 are compositionally biased toward basic and acidic residues; that stretch reads EERDPSRGKVSTDKQK. Positions 1102 to 1169 are disordered; that stretch reads EERDPSRGKV…RDPRLSKREE (68 aa). Over residues 1122–1132 the composition is skewed to polar residues; that stretch reads KQNSAVNSSPR. Basic and acidic residues predominate over residues 1151–1169; sequence IRGENGKSARDPRLSKREE. The region spanning 1187-1209 is the GoLoco domain; the sequence is AEEFFELISKAQSNRADDQRGLL. Disordered regions lie at residues 1227-1318 and 1347-1381; these read SELA…QEGT and LMGEGDISSPNSTLLPPPPTPQDTPGPPRPGTSRF. Positions 1261–1280 are enriched in low complexity; the sequence is SDSPATSPASAQSPCSAYSP. Pro residues predominate over residues 1361 to 1381; the sequence is LPPPPTPQDTPGPPRPGTSRF.

Interacts with GNAI1, GNAI2 and GNAI3; the interactions are GDP-dependent. In terms of tissue distribution, expressed in brain.

Its subcellular location is the nucleus. The protein localises to the cytoplasm. It localises to the cell projection. It is found in the dendrite. The protein resides in the synapse. Functionally, regulates G protein-coupled receptor signaling cascades. Inhibits signal transduction by increasing the GTPase activity of G protein alpha subunits, thereby driving them into their inactive GDP-bound form. The chain is Regulator of G-protein signaling 12 (Rgs12) from Mus musculus (Mouse).